Here is an 81-residue protein sequence, read N- to C-terminus: Small ribosomal subunit protein bS16 (81 aa).

Belongs to the bacterial ribosomal protein bS16 family.

The chain is Small ribosomal subunit protein bS16 from Neisseria meningitidis serogroup C (strain 053442).